Reading from the N-terminus, the 497-residue chain is tRNA-2-methylthio-N(6)-dimethylallyladenosine synthase (497 aa).

The region spanning 44–161 (KKVFVTTQGC…LPELYDQSHQ (118 aa)) is the MTTase N-terminal domain. [4Fe-4S] cluster-binding residues include C53, C90, C124, C205, C209, and C212. Positions 191–423 (RVEGFKAFVS…QKVIIDSTLA (233 aa)) constitute a Radical SAM core domain. The region spanning 426 to 494 (HEMVGTTTRV…PHMVKGEIEA (69 aa)) is the TRAM domain.

This sequence belongs to the methylthiotransferase family. MiaB subfamily. In terms of assembly, monomer. [4Fe-4S] cluster is required as a cofactor.

It is found in the cytoplasm. It catalyses the reaction N(6)-dimethylallyladenosine(37) in tRNA + (sulfur carrier)-SH + AH2 + 2 S-adenosyl-L-methionine = 2-methylsulfanyl-N(6)-dimethylallyladenosine(37) in tRNA + (sulfur carrier)-H + 5'-deoxyadenosine + L-methionine + A + S-adenosyl-L-homocysteine + 2 H(+). In terms of biological role, catalyzes the methylthiolation of N6-(dimethylallyl)adenosine (i(6)A), leading to the formation of 2-methylthio-N6-(dimethylallyl)adenosine (ms(2)i(6)A) at position 37 in tRNAs that read codons beginning with uridine. This is tRNA-2-methylthio-N(6)-dimethylallyladenosine synthase from Psychrobacter cryohalolentis (strain ATCC BAA-1226 / DSM 17306 / VKM B-2378 / K5).